Consider the following 630-residue polypeptide: Glutathione hydrolase proenzyme 1 (630 aa).

At 1–49 (MGINTSSAQSSGAASIARSSVNVKSGNRHLSSNKKSATSALEERASRPS) the chain is on the cytoplasmic side. A helical; Signal-anchor for type II membrane protein membrane pass occupies residues 50–70 (ILVTFLVLAGTILSLYIWPIL). Residues 71–630 (SPDLFFANQR…SRKQAVAAAY (560 aa)) are Lumenal-facing. Asn156 carries N-linked (GlcNAc...) asparagine glycosylation. Arg165 serves as a coordination point for L-glutamate. N-linked (GlcNAc...) asparagine glycans are attached at residues Asn180, Asn315, Asn397, and Asn417. Thr441 functions as the Nucleophile in the catalytic mechanism. L-glutamate is bound by residues Ser459, Asn461, Asp483, 511–512 (SS), and 532–533 (GG). N-linked (GlcNAc...) asparagine glycosylation occurs at Asn612.

Belongs to the gamma-glutamyltransferase family. Heterodimer composed of the light and heavy chains. The active site is located in the light chain. Cleaved by autocatalysis into a large and a small subunit.

The protein resides in the endoplasmic reticulum membrane. It carries out the reaction an N-terminal (5-L-glutamyl)-[peptide] + an alpha-amino acid = 5-L-glutamyl amino acid + an N-terminal L-alpha-aminoacyl-[peptide]. The catalysed reaction is glutathione + H2O = L-cysteinylglycine + L-glutamate. The enzyme catalyses an S-substituted glutathione + H2O = an S-substituted L-cysteinylglycine + L-glutamate. It participates in sulfur metabolism; glutathione metabolism. Catalyzes the transfer of the gamma-glutamyl moiety of glutathione (GSH) and other gamma-glutamyl compounds to amino acids and peptides. Major GSH-degrading enzyme, catalyzing the hydrolytic release of L-glutamate from GSH. This is Glutathione hydrolase proenzyme 1 (ggt1) from Schizosaccharomyces pombe (strain 972 / ATCC 24843) (Fission yeast).